The following is a 142-amino-acid chain: MQVIDLPLDRAGEALVAAWCRDRRLEVLAERWHCRWGELDLVTQEDSALRFIEVKTRRQTGWDQSGLLAIGPAKQRCLSRAAACYLASLGNQAAVACRFDVALVRYRSEPSAAAVKVAAWGQGYLELWCYLPDAFSAVESGW.

Belongs to the UPF0102 family.

The protein is UPF0102 protein Synpcc7942_0312 of Synechococcus elongatus (strain ATCC 33912 / PCC 7942 / FACHB-805) (Anacystis nidulans R2).